A 342-amino-acid chain; its full sequence is N-acetyl-gamma-glutamyl-phosphate reductase (342 aa).

C149 is an active-site residue.

This sequence belongs to the NAGSA dehydrogenase family. Type 1 subfamily.

The protein resides in the cytoplasm. It carries out the reaction N-acetyl-L-glutamate 5-semialdehyde + phosphate + NADP(+) = N-acetyl-L-glutamyl 5-phosphate + NADPH + H(+). It functions in the pathway amino-acid biosynthesis; L-arginine biosynthesis; N(2)-acetyl-L-ornithine from L-glutamate: step 3/4. Catalyzes the NADPH-dependent reduction of N-acetyl-5-glutamyl phosphate to yield N-acetyl-L-glutamate 5-semialdehyde. The chain is N-acetyl-gamma-glutamyl-phosphate reductase from Nitrosospira multiformis (strain ATCC 25196 / NCIMB 11849 / C 71).